The primary structure comprises 335 residues: Adenosine deaminase (335 aa).

Positions 12 and 14 each coordinate Zn(2+). Residues histidine 14 and aspartate 16 each contribute to the substrate site. Position 197 (histidine 197) interacts with Zn(2+). Residue glutamate 200 is the Proton donor of the active site. Zn(2+) is bound at residue aspartate 278.

Belongs to the metallo-dependent hydrolases superfamily. Adenosine and AMP deaminases family. Adenosine deaminase subfamily. Zn(2+) serves as cofactor.

It catalyses the reaction adenosine + H2O + H(+) = inosine + NH4(+). The catalysed reaction is 2'-deoxyadenosine + H2O + H(+) = 2'-deoxyinosine + NH4(+). Its function is as follows. Catalyzes the hydrolytic deamination of adenosine and 2-deoxyadenosine. This Clostridium botulinum (strain ATCC 19397 / Type A) protein is Adenosine deaminase.